The sequence spans 97 residues: MKIRPLHDRVIVKRKEVESKSAGGIVLTGTAAGKSTRGEVLAVGNGRILDNGEIKPLDVKVGDVVIFNDGYGVKAEKIDNEEVLIMSESDILAIVEA.

The protein belongs to the GroES chaperonin family. As to quaternary structure, heptamer of 7 subunits arranged in a ring. Interacts with the chaperonin GroEL.

The protein resides in the cytoplasm. Together with the chaperonin GroEL, plays an essential role in assisting protein folding. The GroEL-GroES system forms a nano-cage that allows encapsulation of the non-native substrate proteins and provides a physical environment optimized to promote and accelerate protein folding. GroES binds to the apical surface of the GroEL ring, thereby capping the opening of the GroEL channel. The chain is Co-chaperonin GroES from Yersinia pseudotuberculosis serotype O:1b (strain IP 31758).